Here is a 233-residue protein sequence, read N- to C-terminus: MKKILVKNQVEGGKVAFELLKESLTAGAQTLGLATGSSPIALYQEMVESDVDFSELYSVNLDEYVGLSPEHDQSYHAFMKAQLFDTKPFKESFLPDGMAEDLEKAAKDYDDVLAHHIIDLQILGIGSNGHIGFNEPGTPFDSQTHVVDLTDSTIEANSRFFASRGQVPTKAISMGIASIMAAKKIILFAYGDKKADAIFKMLKGPVTEEVPASVLQNHPDVTLILDQAAAAKL.

Residue D62 is the Proton acceptor; for enolization step of the active site. N128 serves as the catalytic For ring-opening step. H130 functions as the Proton acceptor; for ring-opening step in the catalytic mechanism. Residue E135 is the For ring-opening step of the active site.

This sequence belongs to the glucosamine/galactosamine-6-phosphate isomerase family. NagB subfamily.

The catalysed reaction is alpha-D-glucosamine 6-phosphate + H2O = beta-D-fructose 6-phosphate + NH4(+). The protein operates within amino-sugar metabolism; N-acetylneuraminate degradation; D-fructose 6-phosphate from N-acetylneuraminate: step 5/5. Its function is as follows. Catalyzes the reversible isomerization-deamination of glucosamine 6-phosphate (GlcN6P) to form fructose 6-phosphate (Fru6P) and ammonium ion. The sequence is that of Glucosamine-6-phosphate deaminase from Streptococcus thermophilus (strain ATCC BAA-491 / LMD-9).